A 561-amino-acid polypeptide reads, in one-letter code: Urocanate hydratase (561 aa).

Residues 52–53 (GG), glutamine 130, 176–178 (GMG), glutamate 196, arginine 201, 242–243 (NA), 263–267 (QTSAH), 273–274 (YL), and tyrosine 322 each bind NAD(+). The active site involves cysteine 410. Glycine 492 serves as a coordination point for NAD(+).

Belongs to the urocanase family. It depends on NAD(+) as a cofactor.

It is found in the cytoplasm. It catalyses the reaction 4-imidazolone-5-propanoate = trans-urocanate + H2O. The protein operates within amino-acid degradation; L-histidine degradation into L-glutamate; N-formimidoyl-L-glutamate from L-histidine: step 2/3. Catalyzes the conversion of urocanate to 4-imidazolone-5-propionate. In Salmonella typhi, this protein is Urocanate hydratase.